A 338-amino-acid chain; its full sequence is MLLAIQYPSWLHPEIIPGLPFLRWYGLMYLVAFGIAYFLFSYQVKHGEFERYSGCQKAMTQDDISDLFIWGILGLILGARIFGTLVYNPETYLKAPWLIFWPFARDGAGNLTFTGFQGMSYHGGFIGGFLGVILWTKKSKFKFAAVADLMAVSIPLGYTFGRLGNFANGELYGRITTSKIGMIFPQTPISDRFYLAESWVRDFAEQAGLLVQDGASMINLPRHPSQLYEAFFEGIILWLILWLLRKKKPFDGFLVCVYTLGYGFFRFFIEYFRQPDANKGYPISFGTGAANIYVYESWKNISTGQILCSLMILASLAAMLILYLQEKKLKEKKGNIDG.

The next 4 membrane-spanning stretches (helical) occupy residues 24-44 (WYGL…SYQV), 67-87 (LFIW…TLVY), 115-135 (GFQG…VILW), and 141-161 (FKFA…YTFG). Arginine 162 is a binding site for a 1,2-diacyl-sn-glycero-3-phospho-(1'-sn-glycerol). Helical transmembrane passes span 224–244 (PSQL…LWLL), 252–272 (GFLV…IEYF), and 304–324 (GQIL…ILYL).

Belongs to the Lgt family.

The protein resides in the cell inner membrane. It catalyses the reaction L-cysteinyl-[prolipoprotein] + a 1,2-diacyl-sn-glycero-3-phospho-(1'-sn-glycerol) = an S-1,2-diacyl-sn-glyceryl-L-cysteinyl-[prolipoprotein] + sn-glycerol 1-phosphate + H(+). Its pathway is protein modification; lipoprotein biosynthesis (diacylglyceryl transfer). Functionally, catalyzes the transfer of the diacylglyceryl group from phosphatidylglycerol to the sulfhydryl group of the N-terminal cysteine of a prolipoprotein, the first step in the formation of mature lipoproteins. The polypeptide is Phosphatidylglycerol--prolipoprotein diacylglyceryl transferase (Treponema denticola (strain ATCC 35405 / DSM 14222 / CIP 103919 / JCM 8153 / KCTC 15104)).